The chain runs to 750 residues: Amyloid-beta A4 precursor protein-binding family A member 2 (750 aa).

2 disordered regions span residues 1-94 and 143-346; these read MAHR…PEEE and DSVG…IPET. Residue Ser-11 is modified to Phosphoserine. Positions 70 to 80 are enriched in polar residues; it reads GDSSSDYVNNT. Residues 81–94 show a composition bias toward acidic residues; sequence SEEEDYDEGLPEEE. The interval 185 to 271 is STXBP1-binding; it reads HYCSSKESYQ…STEACPPSDT (87 aa). At Ser-209 the chain carries Phosphoserine. A compositionally biased stretch (acidic residues) spans 219 to 228; sequence DLEEQEEDID. Composition is skewed to polar residues over residues 238 to 248 and 332 to 344; these read LSMTSITSASE and SDLNGPTDNNNIP. Positions 367–556 constitute a PID domain; the sequence is LIDGIIFAAN…IINTQEMYND (190 aa). PDZ domains lie at 569–654 and 660–736; these read ELQL…NIVS and TVLI…MPAA.

Part of a multimeric complex containing STXBP1 and syntaxin-1. Binds to the cytoplasmic domain of amyloid-beta protein, and to the nuclear factor NF-kappa-B/p65 via its PDZ domain. Interacts with the N-terminal domain of NECAB3. As to expression, specifically expressed in neurons, predominantly of the cerebellum, hippocampus, and spinal cord. Lesser extent in neurons of the cerebral cortex and anterior thalmic nuclei.

Functionally, putative function in synaptic vesicle exocytosis by binding to STXBP1, an essential component of the synaptic vesicle exocytotic machinery. May modulate processing of the amyloid-beta precursor protein (APP) and hence formation of APP-beta. The chain is Amyloid-beta A4 precursor protein-binding family A member 2 (Apba2) from Mus musculus (Mouse).